Here is a 547-residue protein sequence, read N- to C-terminus: Delta-guaiene synthase 3 (547 aa).

Mg(2+) contacts are provided by Asp-299, Asp-303, and Asp-444. Positions Asp-299–Asp-303 match the DDXXD motif motif.

This sequence belongs to the terpene synthase family. It depends on Mg(2+) as a cofactor.

The catalysed reaction is (2E,6E)-farnesyl diphosphate = delta-guaiene + diphosphate. It carries out the reaction (2E,6E)-farnesyl diphosphate = alpha-guaiene + diphosphate. Its pathway is secondary metabolite biosynthesis; terpenoid biosynthesis. Its function is as follows. Sesquiterpene synthase involved in the biosynthesis of delta-guaiene (78.2%) and alpha-guaiene (20.9%), two structures composed of five- and seven-membered rings. Also produces 0.9% of alpha-humulene. This chain is Delta-guaiene synthase 3 (C4), found in Aquilaria crassna (Eagle wood).